A 457-amino-acid chain; its full sequence is 3-ketoacyl-CoA thiolase 5, peroxisomal (457 aa).

Residues 1–37 (MERAMERQKILLRHLNPVSSSNSSLKHEPSLLSPVNC) constitute a peroxisome transit peptide. Cysteine 137 (acyl-thioester intermediate) is an active-site residue. Active-site proton acceptor residues include histidine 394 and cysteine 426.

This sequence belongs to the thiolase-like superfamily. Thiolase family. Homodimer. In terms of tissue distribution, expressed in seedlings and wounded leaves.

Its subcellular location is the peroxisome. The enzyme catalyses an acyl-CoA + acetyl-CoA = a 3-oxoacyl-CoA + CoA. It functions in the pathway lipid metabolism; fatty acid metabolism. In terms of biological role, probably involved in long chain fatty-acid beta-oxidation prior to gluconeogenesis during germination and subsequent seedling growth. Involved in systemic jasmonic acid (JA) biosynthesis after wounding and may be during senescence. This is 3-ketoacyl-CoA thiolase 5, peroxisomal (KAT5) from Arabidopsis thaliana (Mouse-ear cress).